Consider the following 305-residue polypeptide: Glutaminase (305 aa).

The substrate site is built by Ser-61, Asn-113, Glu-158, Asn-165, Tyr-189, Tyr-241, and Val-259.

It belongs to the glutaminase family. As to quaternary structure, homotetramer.

It carries out the reaction L-glutamine + H2O = L-glutamate + NH4(+). In Alkaliphilus metalliredigens (strain QYMF), this protein is Glutaminase.